The primary structure comprises 435 residues: GTPase Der (435 aa).

EngA-type G domains follow at residues 8–169 (NLVA…NFEN) and 176–351 (FKIA…NNLS). Residues 14–21 (GKPNVGKS), 61–65 (DTGGI), 123–126 (NKLD), 182–189 (GKPNAGKS), 229–233 (DTAGI), and 294–297 (NKWD) contribute to the GTP site. The 84-residue stretch at 352 to 435 (REIKQNLLND…PINLVLKKNK (84 aa)) folds into the KH-like domain.

This sequence belongs to the TRAFAC class TrmE-Era-EngA-EngB-Septin-like GTPase superfamily. EngA (Der) GTPase family. As to quaternary structure, associates with the 50S ribosomal subunit.

GTPase that plays an essential role in the late steps of ribosome biogenesis. The sequence is that of GTPase Der from Mycoplasmopsis pulmonis (strain UAB CTIP) (Mycoplasma pulmonis).